We begin with the raw amino-acid sequence, 223 residues long: Ribose-5-phosphate isomerase A (223 aa).

Substrate is bound by residues 28-31 (TGST), 81-84 (DGAD), and 94-97 (KGGG). Residue glutamate 103 is the Proton acceptor of the active site. Residue lysine 121 coordinates substrate.

Belongs to the ribose 5-phosphate isomerase family. In terms of assembly, homodimer.

It catalyses the reaction aldehydo-D-ribose 5-phosphate = D-ribulose 5-phosphate. It participates in carbohydrate degradation; pentose phosphate pathway; D-ribose 5-phosphate from D-ribulose 5-phosphate (non-oxidative stage): step 1/1. Catalyzes the reversible conversion of ribose-5-phosphate to ribulose 5-phosphate. This is Ribose-5-phosphate isomerase A from Herminiimonas arsenicoxydans.